Consider the following 90-residue polypeptide: Inner kinetochore subunit MHF1 (90 aa).

It belongs to the TAF9 family. CENP-S/MHF1 subfamily. As to quaternary structure, the MHF histone-fold complex is a heterotetramer of 2 MHF1-MHF2 heterodimers. Together with MPH1/FANCM, forms the FANCM-MHF complex. Component of the inner kinetochore constitutive centromere-associated network (CCAN) (also known as central kinetochore CTF19 complex in yeast), which is composed of at least AME1, CHL4, CNN1, CTF3, CTF19, IML3, MCM16, MCM21, MCM22, MHF1, MHF2, MIF2, NKP1, NKP2, OKP1 and WIP1.

In terms of biological role, dsDNA-binding component of a FANCM-MHF complex involved in DNA damage repair and genome maintenance. FANCM-MHF promotes gene conversion at blocked replication forks, probably by reversal of the stalled fork. Component of the kinetochore, a multiprotein complex that assembles on centromeric DNA and attaches chromosomes to spindle microtubules, mediating chromosome segregation and sister chromatid segregation during meiosis and mitosis. Component of the inner kinetochore constitutive centromere-associated network (CCAN), which serves as a structural platform for outer kinetochore assembly. The polypeptide is Inner kinetochore subunit MHF1 (Saccharomyces cerevisiae (strain ATCC 204508 / S288c) (Baker's yeast)).